Reading from the N-terminus, the 312-residue chain is Prephenate dehydratase (312 aa).

Positions glycine 3–arginine 194 constitute a Prephenate dehydratase domain. Positions serine 208–proline 285 constitute an ACT domain. A disordered region spans residues glycine 291 to proline 312.

As to quaternary structure, homodimer.

It carries out the reaction prephenate + H(+) = 3-phenylpyruvate + CO2 + H2O. It functions in the pathway amino-acid biosynthesis; L-phenylalanine biosynthesis; phenylpyruvate from prephenate: step 1/1. The protein is Prephenate dehydratase (pheA) of Mycolicibacterium vanbaalenii (strain DSM 7251 / JCM 13017 / BCRC 16820 / KCTC 9966 / NRRL B-24157 / PYR-1) (Mycobacterium vanbaalenii).